Consider the following 653-residue polypeptide: MASTNSQDMVCGSVTFRDVAVDFSQEEWACLDATQKVLYRNIMLETYSNLVAVVGSCISKPDLIVLLEQEKEPWMAVNEETGRPSPDLEADYDAENISPQNRIYNRKFSKQSIKQLSRTFDPKGSWFSNGPNYSTFHGLRDCQSDAGQQITNKEGVPPHTCQTLAHNTEKPYECKECGKCFGCRSTLTQHQSVHTGEKPYECKECGKAFRLPQQLTRHQKCHSGEKPFSHNEGRQAFQHPNLLKYPKAIHTGAKAFACRECGKSFNRVSSLVEHGLIHADVKPYECNECGKAFKRHRSFVRHQKIHSGERPFQCKDCGKGFIVLAHLTRHQSSHSEEKPFECEECGKKFRTARHLVKHQRIHSGEKPFECNVCGSAFRLQLYLSEHQKTHMEEKYLECNVCGKAFRLQVYLSEHLKTHTEENPFKCKLCGSAFPNKYQLNKHLTVHTDGKPYQCKECGKCFRQRSKLTEHESIHTGKKPFQCEECGKFFRLNTLLIHHQKSHSGERPFECKECGKAFLLPSQLNSHKIVHTSKRPFECKVCGKSFKRESNLIQHGAVHAGVKSYECSECGKGFIHRSSLFHHRKIHSDEKPFKCQECGKAFVVLAYLIQHQSIHTGEKPFECELCGSAFRCRSQLNKHLRIHTDVKLFQCVED.

Residues 14-86 (VTFRDVAVDF…VNEETGRPSP (73 aa)) form the KRAB domain. 16 consecutive C2H2-type zinc fingers follow at residues 172–194 (YECK…QSVH), 200–222 (YECK…QKCH), 256–278 (FACR…GLIH), 284–306 (YECN…QKIH), 312–334 (FQCK…QSSH), 340–362 (FECE…QRIH), 368–390 (FECN…QKTH), 396–418 (LECN…LKTH), 424–446 (FKCK…LTVH), 452–474 (YQCK…ESIH), 480–502 (FQCE…QKSH), 508–530 (FECK…KIVH), 536–558 (FECK…GAVH), 564–586 (YECS…RKIH), 592–614 (FKCQ…QSIH), and 620–642 (FECE…LRIH).

It belongs to the krueppel C2H2-type zinc-finger protein family. As to expression, expressed predominantly in the testis (at protein level).

The protein localises to the nucleus. May have a role during differentiation processes. The polypeptide is Zinc finger protein 59 (Zfp59) (Mus musculus (Mouse)).